The chain runs to 101 residues: MMLEYVLGLSAYLFSIGIYGLITSRNMVRALMCLELILNAVNINFVTFSDFFDSRQLKGNIFSIFVISIAAAEAAIGPAIVSSIYRNRKSIRINQLNLLNK.

3 helical membrane passes run Met-2–Ile-22, Met-32–Phe-52, and Ile-61–Val-81.

This sequence belongs to the complex I subunit 4L family. NDH is composed of at least 16 different subunits, 5 of which are encoded in the nucleus.

The protein localises to the plastid. Its subcellular location is the chloroplast thylakoid membrane. It carries out the reaction a plastoquinone + NADH + (n+1) H(+)(in) = a plastoquinol + NAD(+) + n H(+)(out). It catalyses the reaction a plastoquinone + NADPH + (n+1) H(+)(in) = a plastoquinol + NADP(+) + n H(+)(out). Its function is as follows. NDH shuttles electrons from NAD(P)H:plastoquinone, via FMN and iron-sulfur (Fe-S) centers, to quinones in the photosynthetic chain and possibly in a chloroplast respiratory chain. The immediate electron acceptor for the enzyme in this species is believed to be plastoquinone. Couples the redox reaction to proton translocation, and thus conserves the redox energy in a proton gradient. The chain is NAD(P)H-quinone oxidoreductase subunit 4L, chloroplastic from Populus trichocarpa (Western balsam poplar).